The following is a 172-amino-acid chain: Co-chaperone protein HscB homolog (172 aa).

The region spanning 2–69 is the J domain; that stretch reads NHFELFNLPV…DSRAAYLLAL (68 aa).

It belongs to the HscB family. In terms of assembly, interacts with HscA and stimulates its ATPase activity.

Functionally, co-chaperone involved in the maturation of iron-sulfur cluster-containing proteins. Seems to help targeting proteins to be folded toward HscA. This is Co-chaperone protein HscB homolog from Acinetobacter baumannii (strain SDF).